Consider the following 126-residue polypeptide: CD59 glycoprotein (126 aa).

The first 25 residues, 1 to 25 (MGIQGGSVLFGLLLALAVFCHSGHS), serve as a signal peptide directing secretion. A UPAR/Ly6 domain is found at 26–106 (LQCYNCPNPT…QLENGGTSLS (81 aa)). Intrachain disulfides connect Cys28-Cys51, Cys31-Cys38, Cys44-Cys64, Cys70-Cys88, and Cys89-Cys94. Asn43 carries N-linked (GlcNAc...) asparagine glycosylation. Residue Asn100 is the site of GPI-anchor amidated asparagine attachment. A propeptide spans 101–126 (GGTSLSEKTVLLLVTPLLAAAWCLHP) (removed in mature form).

Interacts with T-cell surface antigen CD2. Post-translationally, N- and O-glycosylated.

It localises to the cell membrane. It is found in the secreted. In terms of biological role, potent inhibitor of the complement membrane attack complex (MAC) action, which protects self-cells from damage during complement activation. Acts by binding to the beta-haipins of C8 (C8A and C8B) components of the assembling MAC, forming an intermolecular beta-sheet that prevents incorporation of the multiple copies of C9 required for complete formation of the osmolytic pore. The chain is CD59 glycoprotein from Papio sp. (Baboon).